The primary structure comprises 208 residues: Recombination protein RecR (208 aa).

The segment at Cys-57 to Cys-72 adopts a C4-type zinc-finger fold. Residues Ser-80 to Pro-187 enclose the Toprim domain.

It belongs to the RecR family.

In terms of biological role, may play a role in DNA repair. It seems to be involved in an RecBC-independent recombinational process of DNA repair. It may act with RecF and RecO. The polypeptide is Recombination protein RecR (Polaromonas naphthalenivorans (strain CJ2)).